Consider the following 200-residue polypeptide: N-(5'-phosphoribosyl)anthranilate isomerase (200 aa).

This sequence belongs to the TrpF family.

It carries out the reaction N-(5-phospho-beta-D-ribosyl)anthranilate = 1-(2-carboxyphenylamino)-1-deoxy-D-ribulose 5-phosphate. It participates in amino-acid biosynthesis; L-tryptophan biosynthesis; L-tryptophan from chorismate: step 3/5. The sequence is that of N-(5'-phosphoribosyl)anthranilate isomerase from Endomicrobium trichonymphae.